Here is a 340-residue protein sequence, read N- to C-terminus: MTNNKLILAIETSCDETSVSVIKNGTELLSNTVLSQIDSHKRFGGVVPEVASRHHVEGITATIDESLVSAKVKMEDIDAIAVTQGPGLIGALLIGINAAKALAFAYDKPIIPVHHIAGHIYANHLEQPLTFPLMSLIVSGGHTELVYMKNHLDFEVIGETRDDAVGEAYDKVARTINLPYPGGPHIDRLAAKGKDVYDFPRVWLEKDSYDFSFSGLKSAVINKLHNLRQKNIEIVAEDVATSFQNSVVEVLTYKAIHACKTYNVNRLIVAGGVASNKGLRNALSEACKKEGIHLTIPSPVLCTDNAAMIGAAGYYLYQAGLRGDLALNGQNNIDIETFSV.

The Fe cation site is built by H115 and H119. Substrate is bound by residues 137 to 141, D170, G183, D187, and N276; that span reads IVSGG. D304 lines the Fe cation pocket.

The protein belongs to the KAE1 / TsaD family. Requires Fe(2+) as cofactor.

It localises to the cytoplasm. The enzyme catalyses L-threonylcarbamoyladenylate + adenosine(37) in tRNA = N(6)-L-threonylcarbamoyladenosine(37) in tRNA + AMP + H(+). Required for the formation of a threonylcarbamoyl group on adenosine at position 37 (t(6)A37) in tRNAs that read codons beginning with adenine. Is involved in the transfer of the threonylcarbamoyl moiety of threonylcarbamoyl-AMP (TC-AMP) to the N6 group of A37, together with TsaE and TsaB. TsaD likely plays a direct catalytic role in this reaction. In Staphylococcus epidermidis (strain ATCC 35984 / DSM 28319 / BCRC 17069 / CCUG 31568 / BM 3577 / RP62A), this protein is tRNA N6-adenosine threonylcarbamoyltransferase.